The chain runs to 500 residues: Probable malate:quinone oxidoreductase (500 aa).

It belongs to the MQO family. FAD serves as cofactor.

The catalysed reaction is (S)-malate + a quinone = a quinol + oxaloacetate. The protein operates within carbohydrate metabolism; tricarboxylic acid cycle; oxaloacetate from (S)-malate (quinone route): step 1/1. This is Probable malate:quinone oxidoreductase from Bacillus cereus (strain B4264).